Reading from the N-terminus, the 173-residue chain is Large ribosomal subunit protein bL9 (173 aa).

This sequence belongs to the bacterial ribosomal protein bL9 family.

Binds to the 23S rRNA. The protein is Large ribosomal subunit protein bL9 of Rickettsia bellii (strain OSU 85-389).